Reading from the N-terminus, the 173-residue chain is Shikimate kinase (173 aa).

G10–T15 is a binding site for ATP. T14 contributes to the Mg(2+) binding site. The substrate site is built by D32, R56, and G78. R117 provides a ligand contact to ATP. Substrate is bound at residue R135.

It belongs to the shikimate kinase family. As to quaternary structure, monomer. Mg(2+) is required as a cofactor.

The protein resides in the cytoplasm. It carries out the reaction shikimate + ATP = 3-phosphoshikimate + ADP + H(+). It participates in metabolic intermediate biosynthesis; chorismate biosynthesis; chorismate from D-erythrose 4-phosphate and phosphoenolpyruvate: step 5/7. In terms of biological role, catalyzes the specific phosphorylation of the 3-hydroxyl group of shikimic acid using ATP as a cosubstrate. This chain is Shikimate kinase, found in Limosilactobacillus fermentum (strain NBRC 3956 / LMG 18251) (Lactobacillus fermentum).